The following is a 238-amino-acid chain: Survival of motor neuron-related-splicing factor 30 (238 aa).

The Tudor domain occupies 72 to 132 (SWKVGDKCMA…KPVEEGRKAK (61 aa)). Residues 142–160 (KKEMIAQQREYKKKKALKK) carry the Nuclear localization signal motif. At S201 the chain carries Phosphoserine. The residue at position 219 (K219) is an N6-acetyllysine.

It belongs to the SMN family. In terms of assembly, associates with spliceosomes. Associates with U4/U5/U6 tri-snRNP and with U2 snRNP.

The protein resides in the nucleus speckle. It localises to the nucleus. The protein localises to the cajal body. Functionally, involved in spliceosome assembly. This is Survival of motor neuron-related-splicing factor 30 (SMNDC1) from Bos taurus (Bovine).